A 311-amino-acid chain; its full sequence is Ribosomal RNA large subunit methyltransferase F (311 aa).

Belongs to the methyltransferase superfamily. METTL16/RlmF family.

The protein resides in the cytoplasm. The catalysed reaction is adenosine(1618) in 23S rRNA + S-adenosyl-L-methionine = N(6)-methyladenosine(1618) in 23S rRNA + S-adenosyl-L-homocysteine + H(+). Its function is as follows. Specifically methylates the adenine in position 1618 of 23S rRNA. The chain is Ribosomal RNA large subunit methyltransferase F from Pectobacterium atrosepticum (strain SCRI 1043 / ATCC BAA-672) (Erwinia carotovora subsp. atroseptica).